The chain runs to 981 residues: Ephrin type-A receptor 3 (981 aa).

Residues 1–20 (MALFRIYSFLAPFHILVLCQ) form the signal peptide. Topologically, residues 21 to 545 (ALRNYPDNEV…LAVGDPNQQT (525 aa)) are extracellular. The Eph LBD domain occupies 29 to 210 (EVTLLDSMSA…FYKRCPLAVL (182 aa)). 2 consecutive Fibronectin type-III domains span residues 328-441 (PPSA…TSQT) and 442-533 (VSVI…TSHE). Asparagine 340, asparagine 410, asparagine 435, and asparagine 485 each carry an N-linked (GlcNAc...) asparagine glycan. The helical transmembrane segment at 546 to 566 (ILAISVAGGAVLLVLLVACFI) threads the bilayer. The Cytoplasmic segment spans residues 567 to 981 (VSGRRCGYIK…QAHHGTQVQV (415 aa)). Residues tyrosine 601 and tyrosine 607 each carry the phosphotyrosine; by autocatalysis modification. In terms of domain architecture, Protein kinase spans 626–887 (IRIERVIGAG…QIVNTLDRLI (262 aa)). ATP is bound by residues 633–638 (GAGEFG), lysine 658, and 705–711 (EYMENGS). The residue at position 706 (tyrosine 706) is a Phosphotyrosine; by autocatalysis. The active-site Proton acceptor is aspartate 751. Residue 755-756 (RN) coordinates ATP. Residues tyrosine 784 and tyrosine 927 each carry the phosphotyrosine; by autocatalysis modification. One can recognise an SAM domain in the interval 910–974 (AAVNTVEDWL…LSSIQCLQAH (65 aa)). A PDZ-binding motif is present at residues 979–981 (VQV).

Belongs to the protein kinase superfamily. Tyr protein kinase family. Ephrin receptor subfamily. As to quaternary structure, heterotetramer upon binding of the ligand. The heterotetramer is composed of an ephrin dimer and a receptor dimer. Oligomerization is probably required to induce biological responses. Post-translationally, autophosphorylates upon activation by efna5. Widely expressed in the developing zebrafish nervous system.

The protein resides in the cell membrane. It carries out the reaction L-tyrosyl-[protein] + ATP = O-phospho-L-tyrosyl-[protein] + ADP + H(+). Functionally, receptor tyrosine kinase which binds promiscuously membrane-bound ephrin family ligands residing on adjacent cells, leading to contact-dependent bidirectional signaling into neighboring cells. The signaling pathway downstream of the receptor is referred to as forward signaling while the signaling pathway downstream of the ephrin ligand is referred to as reverse signaling. Highly promiscuous for ephrin-A ligands it binds preferentially efna5. Upon activation by efna5 regulates cell-cell adhesion, cytoskeletal organization and cell migration. Plays a role in cardiac cells migration and differentiation probably through activation by efna1. Involved in the retinotectal mapping of neurons. May also control the segregation but not the guidance of motor and sensory axons during neuromuscular circuit development. The protein is Ephrin type-A receptor 3 (epha3) of Danio rerio (Zebrafish).